An 85-amino-acid polypeptide reads, in one-letter code: uncharacterized protein (85 aa).

2 helical membrane passes run 20–42 (IYWFFCLYYKDGPILYTIYTTFL) and 52–69 (IILRNTVAFLSFMYKHYY).

Its subcellular location is the membrane. This is an uncharacterized protein from Saccharomyces cerevisiae (strain ATCC 204508 / S288c) (Baker's yeast).